The chain runs to 351 residues: Phosphoribosylformylglycinamidine cyclo-ligase (351 aa).

The protein belongs to the AIR synthase family.

The protein localises to the cytoplasm. It catalyses the reaction 2-formamido-N(1)-(5-O-phospho-beta-D-ribosyl)acetamidine + ATP = 5-amino-1-(5-phospho-beta-D-ribosyl)imidazole + ADP + phosphate + H(+). Its pathway is purine metabolism; IMP biosynthesis via de novo pathway; 5-amino-1-(5-phospho-D-ribosyl)imidazole from N(2)-formyl-N(1)-(5-phospho-D-ribosyl)glycinamide: step 2/2. The protein is Phosphoribosylformylglycinamidine cyclo-ligase of Oleidesulfovibrio alaskensis (strain ATCC BAA-1058 / DSM 17464 / G20) (Desulfovibrio alaskensis).